Consider the following 458-residue polypeptide: Selection and upkeep of intraepithelial T-cells protein 3 (458 aa).

The N-terminal stretch at 1-24 is a signal peptide; that stretch reads MGSIQIIFAAYCVVLCVLQMLVLS. The Extracellular segment spans residues 25–237; it reads SEQFTITGLE…ESISIVLTGD (213 aa). The Ig-like V-type domain occupies 26 to 141; it reads EQFTITGLER…EEHITEVKVT (116 aa). Cystine bridges form between C49-C123 and C163-C217. In terms of domain architecture, Ig-like C1-type spans 142–231; it reads ATSSDIKIIM…LLTHQEESIS (90 aa). N-linked (GlcNAc...) asparagine glycosylation is present at N200. The helical transmembrane segment at 238–258 threads the bilayer; it reads LFSWKIDWILILSIIACVMIP. The Cytoplasmic portion of the chain corresponds to 259 to 283; that stretch reads YSMTSYLQQHLIHGSCSQRSHHWRK. A helical transmembrane segment spans residues 284-304; the sequence is NAMVCMSSVIAIIGSMLILHL. Topologically, residues 305-324 are extracellular; sequence KQRVPISDQHFELDTLYLED. The chain crosses the membrane as a helical span at residues 325–345; the sequence is ISVILCVVIVFNLKLNLLTYY. Residues 346 to 359 are Cytoplasmic-facing; sequence RLERKYDGCTPGCK. The helical transmembrane segment at 360–380 threads the bilayer; sequence ACFYILKIIIIILPFVFTFGC. Over 381–414 the chain is Extracellular; it reads YNAIFLKYHQLQKKVSIPDPLYYFYTSWLVNMEM. The chain crosses the membrane as a helical span at residues 415-435; the sequence is LGVFLVFFPTFINLIEFSQFI. Topologically, residues 436 to 458 are cytoplasmic; sequence KTVPKPIWLCQENMREDDAIRHR.

It belongs to the SKINT family. In terms of tissue distribution, expressed in skin and thymus.

Its subcellular location is the membrane. Functionally, may act by engaging a cell surface molecule on immature T-cells in the embryonic thymus. The chain is Selection and upkeep of intraepithelial T-cells protein 3 (Skint3) from Mus musculus (Mouse).